Consider the following 718-residue polypeptide: Exostosin-2 (718 aa).

The Cytoplasmic portion of the chain corresponds to 1–25; that stretch reads MCASVKSNIRGPALIPRMKTKHRIY. A helical; Signal-anchor for type II membrane protein membrane pass occupies residues 26 to 46; that stretch reads YVTLFSIVLLGLIATGMFQFW. Over 47–718 the chain is Lumenal; the sequence is PHSIESSSDG…LKSFPNIGSL (672 aa). Disulfide bonds link Cys-85/Cys-90, Cys-96/Cys-151, Cys-286/Cys-300, and Cys-318/Cys-339. N-linked (GlcNAc...) asparagine glycosylation is present at Asn-288. 4 residues coordinate UDP: Leu-461, Arg-465, Asn-490, and Asn-517. Arg-465, Asn-490, Asn-517, Arg-522, Asp-538, Asp-539, and Asp-540 together coordinate UDP-N-acetyl-alpha-D-glucosamine. Residues Asp-538 and Asp-539 each coordinate UDP. A Mn(2+)-binding site is contributed by Asp-540. Positions 582 and 584 each coordinate a protein. A disulfide bond links Cys-626 and Cys-676. Residues Glu-627 and Asp-628 each contribute to the UDP-N-acetyl-alpha-D-glucosamine site. Asn-637 is a glycosylation site (N-linked (GlcNAc...) asparagine). A protein-binding residues include Lys-651 and Lys-653. Residue Arg-673 coordinates UDP-N-acetyl-alpha-D-glucosamine.

The protein belongs to the glycosyltransferase 47 family. Part of the heparan sulfate polymerase, a dimeric complex composed of EXT1 and EXT2. Could also form homooligomeric complexes. Interacts with NDST1. Interacts with GALNT5. Mn(2+) is required as a cofactor. N-glycosylated at Asn-637. In terms of processing, a soluble form is generated by proteolytic processing. Expressed in heart, brain, spleen, lung, liver, skeletal muscle and testis. Heart shows a high expression.

The protein localises to the golgi apparatus membrane. The protein resides in the golgi apparatus. It is found in the cis-Golgi network membrane. It localises to the endoplasmic reticulum membrane. Its subcellular location is the secreted. The enzyme catalyses 3-O-{[(1-&gt;4)-beta-D-GlcA-(1-&gt;4)-alpha-D-GlcNAc](n)-(1-&gt;4)-beta-D-GlcA-(1-&gt;3)-beta-D-Gal-(1-&gt;3)-beta-D-Gal-(1-&gt;4)-beta-D-Xyl}-L-seryl-[protein] + UDP-N-acetyl-alpha-D-glucosamine = 3-O-{alpha-D-GlcNAc-[(1-&gt;4)-beta-D-GlcA-(1-&gt;4)-alpha-D-GlcNAc](n)-(1-&gt;4)-beta-D-GlcA-(1-&gt;3)-beta-D-Gal-(1-&gt;3)-beta-D-Gal-(1-&gt;4)-beta-D-Xyl}-L-seryl-[protein] + UDP + H(+). It functions in the pathway protein modification; protein glycosylation. Functionally, glycosyltransferase forming with EXT1 the heterodimeric heparan sulfate polymerase which catalyzes the elongation of the heparan sulfate glycan backbone. Glycan backbone extension consists in the alternating transfer of (1-&gt;4)-beta-D-GlcA and (1-&gt;4)-alpha-D-GlcNAc residues from their respective UDP-sugar donors. Both EXT1 and EXT2 are required for the full activity of the polymerase since EXT1 bears the N-acetylglucosaminyl-proteoglycan 4-beta-glucuronosyltransferase activity within the complex while EXT2 carries the glucuronosyl-N-acetylglucosaminyl-proteoglycan 4-alpha-N-acetylglucosaminyltransferase activity. Heparan sulfate proteoglycans are ubiquitous components of the extracellular matrix and play an important role in tissue homeostasis and signaling. This chain is Exostosin-2, found in Mus musculus (Mouse).